A 192-amino-acid polypeptide reads, in one-letter code: ATP synthase protein MI25 (192 aa).

The chain crosses the membrane as a helical span at residues 29-49 (ILIYNEEMIVALCFIGFIIFS).

This sequence belongs to the ATPase protein MI25 family. F-type ATPases have 2 components, CF(1) - the catalytic core - and CF(0) - the membrane proton channel. CF(1) has five subunits: alpha(3), beta(3), gamma(1), delta(1), epsilon(1). CF(0) has three main subunits: a, b and c.

The protein resides in the mitochondrion membrane. Its function is as follows. This is one of the chains of the nonenzymatic component (CF(0) subunit) of the mitochondrial ATPase complex. The polypeptide is ATP synthase protein MI25 (ATP4) (Arabidopsis thaliana (Mouse-ear cress)).